The chain runs to 352 residues: WAT1-related protein At1g11450 (352 aa).

The next 10 membrane-spanning stretches (helical) occupy residues 14-34, 46-66, 83-103, 107-127, 139-159, 187-207, 219-239, 253-273, 283-303, and 308-328; these read WPPMIVMVTSQVAMGSVNALV, IIGAYRMAISSFILVPIAYFL, FISGLLGASLMQFFYLLGLSY, TVACALVSLMPAITFAFALIL, AGMIKVMGTLICISGALFLTF, WLLGCLYLVIGIVLLSLWILF, FSSTCLMSIFAAFQCALLSLY, FVIGVIIYAGVIGQAMSTVAA, VFASAIMPVSLISATLFDFLI, and LYLGSVIGSVGTIIGLYVFLW. 2 consecutive EamA domains span residues 27 to 157 and 192 to 335; these read MGSV…ALFL and LYLV…KETE.

This sequence belongs to the drug/metabolite transporter (DMT) superfamily. Plant drug/metabolite exporter (P-DME) (TC 2.A.7.4) family.

Its subcellular location is the membrane. The sequence is that of WAT1-related protein At1g11450 from Arabidopsis thaliana (Mouse-ear cress).